The following is a 424-amino-acid chain: S-phase kinase-associated protein 2 (424 aa).

Residues 52–73 form a disordered region; that stretch reads PHGLLSNLGHPQSPPRKRVKGK. S64 carries the post-translational modification Phosphoserine. The Nuclear localization signal motif lies at 67 to 73; it reads RKRVKGK. An N6-acetyllysine; by p300/EP300 mark is found at K68 and K71. Position 75 is a phosphoserine (S75). The 47-residue stretch at 94–140 folds into the F-box domain; sequence GVSWDSLPDELLLGIFSCLCLPELLRVSGVCKRWYRLSLDESLWQSL. 10 LRR repeats span residues 151 to 176, 177 to 204, 210 to 234, 235 to 257, 258 to 284, 286 to 308, 309 to 330, 334 to 356, 359 to 378, and 380 to 401; these read VTVRLLSRGVVAFRCPRSFMEQPLGE, SFSSFRVQHMDLSNSVINVSNLHKILSE, NLSLEGLQLSDPIVKTLAQNENLVR, LNLCGCSGFSESAVATLLSSCSR, LDELNLSWCFDFTEKHVQAAVAHLPNT, TQLNLSGYRKNLQKTDLCTIIKR, CPNLIRLDLSDSIMLKNDCFPE, LNYLQHLSLSRCYDIIPDTLLEL, IPTLKTLQVFGIVPEGTLQL, and REALPRLQINCAYFTTIARPTM. Phosphoserine is present on S179.

As to quaternary structure, part of a SCF(SKP2) complex consisting of CUL1, RBX1, SKP1 and SKP2. Component of a SCF(SKP2)-like complex containing CUL1, SKP1, TRIM21 and SKP2. Interacts directly with CUL1 and SKP1. Interacts with ASB2 which is the substrate-recognition component of a probable ECS E3 ubiquitin-protein ligase complex; ASB2 is likely to bridge the formation of dimeric E3-ubiquitin-protein ligase complexes composed of an ECS complex and an SCF(SKP2) complex. Interacts with CKS1. Interacts with the cyclin-A-CDK2 complex. Interacts with ORC1, phosphorylated CDT1, phosphorylated RBL2, ELF4, phosphorylated RAG2, FOXO1, UBP43, MYC, TOB1, TAL1 and KMT2A/MLL1. Interacts with TRIM21. Interacts with cyclin-E. Interacts with CARM1. Phosphorylated on serine and threonine resudues in response to DNA damage, promoting 'Lys-63'-linked ubiquitination of NBN. Post-translationally, ubiquitinated by the APC/C complex, leading to its degradation by the proteasome. Deubiquitinated by USP13. In terms of processing, acetylation at Lys-68 and Lys-71 increases stability through impairment of APC/C-mediated proteolysis and promotes cytoplasmic retention. Deacetylated by SIRT3.

It is found in the cytoplasm. The protein resides in the nucleus. It functions in the pathway protein modification; protein ubiquitination. Functionally, substrate recognition component of a SCF (SKP1-CUL1-F-box protein) E3 ubiquitin-protein ligase complex which mediates the ubiquitination and subsequent proteasomal degradation of target proteins involved in cell cycle progression, signal transduction and transcription. Specifically recognizes phosphorylated CDKN1B/p27kip and is involved in regulation of G1/S transition. Degradation of CDKN1B/p27kip also requires CKS1. Recognizes target proteins ORC1, CDT1, RBL2, KMT2A/MLL1, CDK9, RAG2, NBN, FOXO1, UBP43, YTHDF2, and probably MYC, TOB1 and TAL1. Degradation of TAL1 also requires STUB1. Recognizes CDKN1A in association with CCNE1 or CCNE2 and CDK2. Promotes ubiquitination and destruction of CDH1 in a CK1-dependent manner, thereby regulating cell migration. Following phosphorylation in response to DNA damage, mediates 'Lys-63'-linked ubiquitination of NBN, promoting ATM recruitment to DNA damage sites and DNA repair via homologous recombination. Its function is as follows. Through the ubiquitin-mediated proteasomal degradation of viral proteins may have an antiviral activity. This is S-phase kinase-associated protein 2 (Skp2) from Mus musculus (Mouse).